A 99-amino-acid polypeptide reads, in one-letter code: Integration host factor subunit alpha (99 aa).

This sequence belongs to the bacterial histone-like protein family. As to quaternary structure, heterodimer of an alpha and a beta chain.

In terms of biological role, this protein is one of the two subunits of integration host factor, a specific DNA-binding protein that functions in genetic recombination as well as in transcriptional and translational control. This chain is Integration host factor subunit alpha, found in Thioalkalivibrio sulfidiphilus (strain HL-EbGR7).